The following is a 250-amino-acid chain: 3-deoxy-manno-octulosonate cytidylyltransferase (250 aa).

This sequence belongs to the KdsB family.

It is found in the cytoplasm. The catalysed reaction is 3-deoxy-alpha-D-manno-oct-2-ulosonate + CTP = CMP-3-deoxy-beta-D-manno-octulosonate + diphosphate. Its pathway is nucleotide-sugar biosynthesis; CMP-3-deoxy-D-manno-octulosonate biosynthesis; CMP-3-deoxy-D-manno-octulosonate from 3-deoxy-D-manno-octulosonate and CTP: step 1/1. It functions in the pathway bacterial outer membrane biogenesis; lipopolysaccharide biosynthesis. Functionally, activates KDO (a required 8-carbon sugar) for incorporation into bacterial lipopolysaccharide in Gram-negative bacteria. The protein is 3-deoxy-manno-octulosonate cytidylyltransferase of Legionella pneumophila (strain Lens).